The chain runs to 28 residues: Putative fruR/shl operon leader peptide (28 aa).

In Escherichia coli O6:H1 (strain CFT073 / ATCC 700928 / UPEC), this protein is Putative fruR/shl operon leader peptide (fruL).